The chain runs to 906 residues: Ectonucleotide pyrophosphatase/phosphodiesterase family member 1 (906 aa).

The segment at 1–22 (MERDGDQAGHGPRHGSAGNGRE) is disordered. At 1–58 (MERDGDQAGHGPRHGSAGNGRELESPAAASLLAPMDLGEEPLEKAERARPAKDPNTYK) the chain is on the cytoplasmic side. Phosphoserine is present on Ser-25. Positions 27–34 (AAASLLAP) match the Di-leucine motif motif. The chain crosses the membrane as a helical; Signal-anchor for type II membrane protein span at residues 59-79 (VLSLVLSVCVLTTILGCIFGL). Topologically, residues 80 to 906 (KPSCAKEVKS…THLPIFSQED (827 aa)) are extracellular. 2 consecutive SMB domains span residues 86-126 (EVKS…VEPT) and 127-171 (HIWT…DKKS). 10 disulfide bridges follow: Cys-90/Cys-104, Cys-94/Cys-122, Cys-102/Cys-115, Cys-108/Cys-114, Cys-131/Cys-148, Cys-136/Cys-166, Cys-146/Cys-159, Cys-152/Cys-158, Cys-177/Cys-223, and Cys-185/Cys-397. Asn-161 is a glycosylation site (N-linked (GlcNAc...) asparagine). Positions 173-573 (VEETCESIDT…APNNGSHGSL (401 aa)) are phosphodiesterase. Positions 200, 238, and 259 each coordinate AMP. Zn(2+)-binding residues include Asp-200 and Thr-238. Thr-238 serves as the catalytic AMP-threonine intermediate. Residues Thr-238 and Asn-259 each coordinate CMP. The dTMP site is built by Thr-238 and Asn-259. Positions 238 and 259 each coordinate GMP. Phosphothreonine is present on Thr-238. An N-linked (GlcNAc...) asparagine glycan is attached at Asn-267. Positions 272, 277, and 322 each coordinate GMP. The AMP site is built by Lys-277 and Tyr-322. Positions 277 and 322 each coordinate CMP. Tyr-322 contacts dTMP. Asn-323 carries an N-linked (GlcNAc...) asparagine glycan. Asp-358 lines the AMP pocket. Asp-358, His-362, Asp-405, and His-406 together coordinate Zn(2+). Residue Asp-358 participates in CMP binding. A dTMP-binding site is contributed by Asp-358. Asp-358 contacts GMP. His-362 provides a ligand contact to 2',3'-cGAMP. His-406 lines the AMP pocket. Position 406 (His-406) interacts with CMP. His-406 contacts dTMP. His-406 is a binding site for GMP. Intrachain disulfides connect Cys-413-Cys-512, Cys-462-Cys-849, Cys-596-Cys-653, Cys-607-Cys-707, Cys-609-Cys-692, and Cys-819-Cys-829. Residue Asn-459 is glycosylated (N-linked (GlcNAc...) asparagine). Residue Ser-514 coordinates 2',3'-cGAMP. AMP is bound at residue His-517. A Zn(2+)-binding site is contributed by His-517. His-517 lines the CMP pocket. Position 517 (His-517) interacts with dTMP. A GMP-binding site is contributed by His-517. Asn-567 and Asn-624 each carry an N-linked (GlcNAc...) asparagine glycan. The interval 579–628 (KPIYNPSHPKEEGFLSQCPIKSTSNDLGCTCDPWIVPIKDFEKQLNLTTE) is linker. The tract at residues 635–906 (HMTVPYGRPR…THLPIFSQED (272 aa)) is nuclease-like domain. Residues Asp-781, Asp-783, Asp-785, Arg-787, and Asp-789 each contribute to the Ca(2+) site.

The protein belongs to the nucleotide pyrophosphatase/phosphodiesterase family. In terms of assembly, ectonucleotide pyrophosphatase/phosphodiesterase family member 1: Homodimer. Ectonucleotide pyrophosphatase/phosphodiesterase family member 1: Interacts with INSR; leading to inhibit INSR autophosphorylation and subsequent activation of INSR kinase activity. Ectonucleotide pyrophosphatase/phosphodiesterase family member 1, secreted form: Monomeric. The cofactor is Zn(2+). Post-translationally, N-glycosylated. In terms of processing, the secreted form is produced through cleavage at Lys-85 by intracellular processing. Selectively expressed on the surface of antibody-secreting cells. Expressed in osteocytes and osteoclasts.

It localises to the cell membrane. Its subcellular location is the basolateral cell membrane. It is found in the secreted. The enzyme catalyses Hydrolytically removes 5'-nucleotides successively from the 3'-hydroxy termini of 3'-hydroxy-terminated oligonucleotides.. It carries out the reaction a ribonucleoside 5'-triphosphate + H2O = a ribonucleoside 5'-phosphate + diphosphate + H(+). It catalyses the reaction ATP + H2O = AMP + diphosphate + H(+). The catalysed reaction is UTP + H2O = UMP + diphosphate + H(+). The enzyme catalyses GTP + H2O = GMP + diphosphate + H(+). It carries out the reaction CTP + H2O = CMP + diphosphate + H(+). It catalyses the reaction 2',3'-cGAMP + 2 H2O = GMP + AMP + 2 H(+). The catalysed reaction is P(1),P(4)-bis(5'-adenosyl) tetraphosphate + H2O = AMP + ATP + 2 H(+). The enzyme catalyses 3',5'-cyclic AMP + H2O = AMP + H(+). With respect to regulation, at low concentrations of ATP, a phosphorylated intermediate is formed which inhibits further hydrolysis. Its function is as follows. Nucleotide pyrophosphatase that generates diphosphate (PPi) and functions in bone mineralization and soft tissue calcification by regulating pyrophosphate levels. PPi inhibits bone mineralization and soft tissue calcification by binding to nascent hydroxyapatite crystals, thereby preventing further growth of these crystals. Preferentially hydrolyzes ATP, but can also hydrolyze other nucleoside 5' triphosphates such as GTP, CTP and UTP to their corresponding monophosphates with release of pyrophosphate, as well as diadenosine polyphosphates, and also 3',5'-cAMP to AMP. May also be involved in the regulation of the availability of nucleotide sugars in the endoplasmic reticulum and Golgi, and the regulation of purinergic signaling. Inhibits ectopic joint calcification and maintains articular chondrocytes by repressing hedgehog signaling; it is however unclear whether hedgehog inhibition is direct or indirect. Appears to modulate insulin sensitivity. Also involved in melanogenesis. Also able to hydrolyze 2',3'-cGAMP (cyclic GMP-AMP), a second messenger that activates TMEM173/STING and triggers type-I interferon production. 2',3'-cGAMP degradation takes place in the lumen or extracellular space, and not in the cytosol where it is produced; the role of 2',3'-cGAMP hydrolysis is therefore unclear. Not able to hydrolyze the 2',3'-cGAMP linkage isomer 3',3'-cGAMP. This is Ectonucleotide pyrophosphatase/phosphodiesterase family member 1 from Mus musculus (Mouse).